The chain runs to 101 residues: Small ribosomal subunit protein bS18c (101 aa).

The segment covering 1–19 (MNKSKRPFTKSKRSFRRRL) has biased composition (basic residues). A disordered region spans residues 1–20 (MNKSKRPFTKSKRSFRRRLP).

It belongs to the bacterial ribosomal protein bS18 family. As to quaternary structure, part of the 30S ribosomal subunit.

Its subcellular location is the plastid. The protein resides in the chloroplast. In Arabis hirsuta (Hairy rock-cress), this protein is Small ribosomal subunit protein bS18c.